A 191-amino-acid chain; its full sequence is Peptidyl-tRNA hydrolase (191 aa).

TRNA is bound at residue Tyr17. The active-site Proton acceptor is the His22. Positions 68, 70, and 116 each coordinate tRNA.

It belongs to the PTH family. As to quaternary structure, monomer.

The protein localises to the cytoplasm. It catalyses the reaction an N-acyl-L-alpha-aminoacyl-tRNA + H2O = an N-acyl-L-amino acid + a tRNA + H(+). Functionally, hydrolyzes ribosome-free peptidyl-tRNAs (with 1 or more amino acids incorporated), which drop off the ribosome during protein synthesis, or as a result of ribosome stalling. Catalyzes the release of premature peptidyl moieties from peptidyl-tRNA molecules trapped in stalled 50S ribosomal subunits, and thus maintains levels of free tRNAs and 50S ribosomes. The chain is Peptidyl-tRNA hydrolase from Mycolicibacterium smegmatis (strain ATCC 700084 / mc(2)155) (Mycobacterium smegmatis).